The chain runs to 593 residues: Vitamin H transporter (593 aa).

Residues 1-121 (MTISNKSWRS…TTQTKAERRL (121 aa)) lie on the Extracellular side of the membrane. Phosphoserine occurs at positions 32, 33, and 43. Residues 122–142 (LYKLDIIIALYFFMLCWSKSV) traverse the membrane as a helical segment. Residues 143 to 166 (DLNNYTNAYVSNMKEDLNMKGNDY) lie on the Cytoplasmic side of the membrane. Residues 167–187 (VYTSTIANVGAIVFQLPFMYL) traverse the membrane as a helical segment. Topologically, residues 188–190 (LPR) are extracellular. The helical transmembrane segment at 191-211 (FPSHIILPVMDLGWTWFTFAC) threads the bilayer. At 212 to 224 (YRANSLAELRAYR) the chain is on the cytoplasmic side. A helical membrane pass occupies residues 225–245 (FILSAFGAAYYPVSQYILGCW). Residues 246–291 (YAPDEINSRVCLFFCGQQLGSVTSGLLQSRIFKSLNGVHGLAGWRW) lie on the Extracellular side of the membrane. Residues 292-312 (MFLIDAIAISLPTAIIGFFVI) traverse the membrane as a helical segment. Residues 313-361 (PGVPSKCYSLFLTDEEIRIARARNKRNQIKDGVDKSKLAPLWSRKLWKK) lie on the Cytoplasmic side of the membrane. The chain crosses the membrane as a helical span at residues 362–382 (VFCTPAFWVLVVFDTCSWNNM). The Extracellular portion of the chain corresponds to 383–408 (TAYSGSYTLWLKSNTKYSIAQVNNLS). Residues 409-429 (VIPACLGFAYVIFCAFGADLF) traverse the membrane as a helical segment. The Cytoplasmic portion of the chain corresponds to 430–432 (RCK). The chain crosses the membrane as a helical span at residues 433–453 (WIFMVFAAIMNTVSCALLIKW). Topologically, residues 454–460 (DIPSKAK) are extracellular. The chain crosses the membrane as a helical span at residues 461–481 (WYAFFTTYFSVAASPCLWSFI). The Cytoplasmic segment spans residues 482–492 (NDFLRFDPQVK). A helical membrane pass occupies residues 493–513 (AITWIAIYSFSQSTYAWIPTL). Over 514-526 (AWPTVESPRFKTG) the chain is Extracellular. Residues 527–547 (YTVSLIFGAIYGLWTFVVLFF) traverse the membrane as a helical segment. The Cytoplasmic segment spans residues 548–593 (YKRNEKKHALGNGIILYDSNKGEELPEFVKKNMEERDGYYYLKRSS).

This sequence belongs to the major facilitator superfamily. Allantoate permease family.

It is found in the cell membrane. In terms of biological role, involved in uptake of biotin with the concomitant entry of protons. In Saccharomyces cerevisiae (strain ATCC 204508 / S288c) (Baker's yeast), this protein is Vitamin H transporter (VHT1).